The primary structure comprises 318 residues: Acetyl-coenzyme A carboxylase carboxyl transferase subunit alpha (318 aa).

In terms of domain architecture, CoA carboxyltransferase C-terminal spans 39-292 (LTDKSEKQLR…GDSIAAELPD (254 aa)).

Belongs to the AccA family. As to quaternary structure, acetyl-CoA carboxylase is a heterohexamer composed of biotin carboxyl carrier protein (AccB), biotin carboxylase (AccC) and two subunits each of ACCase subunit alpha (AccA) and ACCase subunit beta (AccD).

The protein resides in the cytoplasm. It carries out the reaction N(6)-carboxybiotinyl-L-lysyl-[protein] + acetyl-CoA = N(6)-biotinyl-L-lysyl-[protein] + malonyl-CoA. It functions in the pathway lipid metabolism; malonyl-CoA biosynthesis; malonyl-CoA from acetyl-CoA: step 1/1. Functionally, component of the acetyl coenzyme A carboxylase (ACC) complex. First, biotin carboxylase catalyzes the carboxylation of biotin on its carrier protein (BCCP) and then the CO(2) group is transferred by the carboxyltransferase to acetyl-CoA to form malonyl-CoA. The chain is Acetyl-coenzyme A carboxylase carboxyl transferase subunit alpha from Gluconacetobacter diazotrophicus (strain ATCC 49037 / DSM 5601 / CCUG 37298 / CIP 103539 / LMG 7603 / PAl5).